The primary structure comprises 608 residues: 1-deoxy-D-xylulose-5-phosphate synthase (608 aa).

Residues histidine 80 and 121–123 (GHS) each bind thiamine diphosphate. Aspartate 152 provides a ligand contact to Mg(2+). Thiamine diphosphate contacts are provided by residues 153-154 (GA), asparagine 181, tyrosine 282, and glutamate 357. Position 181 (asparagine 181) interacts with Mg(2+).

This sequence belongs to the transketolase family. DXPS subfamily. In terms of assembly, homodimer. Requires Mg(2+) as cofactor. The cofactor is thiamine diphosphate.

It carries out the reaction D-glyceraldehyde 3-phosphate + pyruvate + H(+) = 1-deoxy-D-xylulose 5-phosphate + CO2. It functions in the pathway metabolic intermediate biosynthesis; 1-deoxy-D-xylulose 5-phosphate biosynthesis; 1-deoxy-D-xylulose 5-phosphate from D-glyceraldehyde 3-phosphate and pyruvate: step 1/1. Functionally, catalyzes the acyloin condensation reaction between C atoms 2 and 3 of pyruvate and glyceraldehyde 3-phosphate to yield 1-deoxy-D-xylulose-5-phosphate (DXP). The chain is 1-deoxy-D-xylulose-5-phosphate synthase from Buchnera aphidicola subsp. Acyrthosiphon pisum (strain 5A).